Consider the following 282-residue polypeptide: Undecaprenyl-diphosphatase (282 aa).

The next 7 membrane-spanning stretches (helical) occupy residues 6–26, 45–65, 85–105, 112–132, 200–220, 230–250, and 262–282; these read LYFV…FIPV, SGKV…MWIF, LFTR…AIFI, FYHP…MLWV, ATEF…VYDM, HDLG…LLVV, and YRGF…WLAF.

This sequence belongs to the UppP family.

Its subcellular location is the cell inner membrane. It catalyses the reaction di-trans,octa-cis-undecaprenyl diphosphate + H2O = di-trans,octa-cis-undecaprenyl phosphate + phosphate + H(+). Functionally, catalyzes the dephosphorylation of undecaprenyl diphosphate (UPP). Confers resistance to bacitracin. This is Undecaprenyl-diphosphatase from Bordetella avium (strain 197N).